The sequence spans 1384 residues: ATP-dependent RNA helicase TDRD9 (1384 aa).

The tract at residues Glu35–Val60 is disordered. Residues Ala36–Glu46 are compositionally biased toward basic and acidic residues. Residues Ile144–Asn310 form the Helicase ATP-binding domain. Gly157–Ser164 provides a ligand contact to ATP. The short motif at Asp256–His259 is the DEAH box element. The Helicase C-terminal domain occupies Ser379–Gly546. The Tudor domain occupies His946–Leu1006.

The protein belongs to the DEAD box helicase family. DEAH subfamily. In terms of assembly, interacts with piRNA-associated proteins PIWIL1 and PIWIL4.

It localises to the cytoplasm. Its subcellular location is the nucleus. It catalyses the reaction ATP + H2O = ADP + phosphate + H(+). ATP-binding RNA helicase which plays a central role during spermatogenesis by repressing transposable elements and preventing their mobilization, which is essential for the germline integrity. Acts via the piRNA metabolic process, which mediates the repression of transposable elements during meiosis by forming complexes composed of piRNAs and Piwi proteins and governs the methylation and subsequent repression of transposons. Acts downstream of piRNA biogenesis: exclusively required for transposon silencing in the nucleus, suggesting that it acts as a nuclear effector in the nucleus together with PIWIL4. In Rattus norvegicus (Rat), this protein is ATP-dependent RNA helicase TDRD9.